A 115-amino-acid chain; its full sequence is Nucleoid-associated protein P9211_00201 (115 aa).

Belongs to the YbaB/EbfC family. As to quaternary structure, homodimer.

The protein resides in the cytoplasm. It is found in the nucleoid. Binds to DNA and alters its conformation. May be involved in regulation of gene expression, nucleoid organization and DNA protection. This chain is Nucleoid-associated protein P9211_00201, found in Prochlorococcus marinus (strain MIT 9211).